A 225-amino-acid chain; its full sequence is MNSIKFPVLDRTTTNSVISTTLNDLSNWSRLSSLWPLLYGTSCCFIEFASLIGSRFDFDRYGLVPRSSPRQADLILTAGTVTMKMAPSLVRLYEQMPEPKYVIAMGACTITGGMFSTDSYSTVRGVDKLIPVDVYLPGCPPKPEAVIDAITKLRKKIAREIYKDRIRPQQGNRCFTTNHKFFVVRSPHTGNYDQELLYPPSSTSEISTETFFKYKSPVSSHELVN.

[4Fe-4S] cluster contacts are provided by cysteine 43, cysteine 44, cysteine 108, and cysteine 139.

Belongs to the complex I 20 kDa subunit family. As to quaternary structure, NDH is composed of at least 16 different subunits, 5 of which are encoded in the nucleus. Requires [4Fe-4S] cluster as cofactor.

The protein localises to the plastid. The protein resides in the chloroplast thylakoid membrane. The catalysed reaction is a plastoquinone + NADH + (n+1) H(+)(in) = a plastoquinol + NAD(+) + n H(+)(out). It carries out the reaction a plastoquinone + NADPH + (n+1) H(+)(in) = a plastoquinol + NADP(+) + n H(+)(out). Its function is as follows. NDH shuttles electrons from NAD(P)H:plastoquinone, via FMN and iron-sulfur (Fe-S) centers, to quinones in the photosynthetic chain and possibly in a chloroplast respiratory chain. The immediate electron acceptor for the enzyme in this species is believed to be plastoquinone. Couples the redox reaction to proton translocation, and thus conserves the redox energy in a proton gradient. In Lepidium virginicum (Virginia pepperweed), this protein is NAD(P)H-quinone oxidoreductase subunit K, chloroplastic.